Consider the following 749-residue polypeptide: 5-methyltetrahydropteroyltriglutamate--homocysteine methyltransferase (749 aa).

Residues 15 to 18 and lysine 114 each bind 5-methyltetrahydropteroyltri-L-glutamate; that span reads RELK. L-homocysteine is bound by residues 425–427 and glutamate 478; that span reads IGS. L-methionine is bound by residues 425-427 and glutamate 478; that span reads IGS. Tryptophan 555 contacts 5-methyltetrahydropteroyltri-L-glutamate. Aspartate 593 lines the L-homocysteine pocket. Residue aspartate 593 coordinates L-methionine. 5-methyltetrahydropteroyltri-L-glutamate is bound at residue glutamate 599. Zn(2+)-binding residues include histidine 636, cysteine 638, and glutamate 660. Residue histidine 689 is the Proton donor of the active site. Cysteine 721 serves as a coordination point for Zn(2+).

This sequence belongs to the vitamin-B12 independent methionine synthase family. Requires Zn(2+) as cofactor.

It carries out the reaction 5-methyltetrahydropteroyltri-L-glutamate + L-homocysteine = tetrahydropteroyltri-L-glutamate + L-methionine. Its pathway is amino-acid biosynthesis; L-methionine biosynthesis via de novo pathway; L-methionine from L-homocysteine (MetE route): step 1/1. In terms of biological role, catalyzes the transfer of a methyl group from 5-methyltetrahydrofolate to homocysteine resulting in methionine formation. The chain is 5-methyltetrahydropteroyltriglutamate--homocysteine methyltransferase from Streptococcus pneumoniae serotype 4 (strain ATCC BAA-334 / TIGR4).